We begin with the raw amino-acid sequence, 609 residues long: Glutamine--fructose-6-phosphate aminotransferase [isomerizing] (609 aa).

Cys2 (nucleophile; for GATase activity) is an active-site residue. One can recognise a Glutamine amidotransferase type-2 domain in the interval 2 to 218 (CGIVGAIAQR…EGDIAEITRR (217 aa)). 2 SIS domains span residues 286–426 (ADEL…LKGL) and 458–599 (LAED…VDQP). Lys604 serves as the catalytic For Fru-6P isomerization activity.

In terms of assembly, homodimer. In pull-down experiments interacts with CedA.

Its subcellular location is the cytoplasm. It carries out the reaction D-fructose 6-phosphate + L-glutamine = D-glucosamine 6-phosphate + L-glutamate. Catalyzes the first step in hexosamine metabolism, converting fructose-6P into glucosamine-6P using glutamine as a nitrogen source. The polypeptide is Glutamine--fructose-6-phosphate aminotransferase [isomerizing] (glmS) (Escherichia coli (strain K12)).